The primary structure comprises 338 residues: Nicotinate-nucleotide--dimethylbenzimidazole phosphoribosyltransferase (338 aa).

Glu-305 functions as the Proton acceptor in the catalytic mechanism.

This sequence belongs to the CobT family.

It catalyses the reaction 5,6-dimethylbenzimidazole + nicotinate beta-D-ribonucleotide = alpha-ribazole 5'-phosphate + nicotinate + H(+). It participates in nucleoside biosynthesis; alpha-ribazole biosynthesis; alpha-ribazole from 5,6-dimethylbenzimidazole: step 1/2. In terms of biological role, catalyzes the synthesis of alpha-ribazole-5'-phosphate from nicotinate mononucleotide (NAMN) and 5,6-dimethylbenzimidazole (DMB). This Rhizobium johnstonii (strain DSM 114642 / LMG 32736 / 3841) (Rhizobium leguminosarum bv. viciae) protein is Nicotinate-nucleotide--dimethylbenzimidazole phosphoribosyltransferase.